A 657-amino-acid chain; its full sequence is Putative GreA-associated domains protein (657 aa).

The GRAD2 domain maps to Met-1–Thr-152. Residues Glu-153–Glu-657 form the GRAD1 domain.

The protein is Putative GreA-associated domains protein of Treponema pallidum (strain Nichols).